The primary structure comprises 358 residues: Ion-translocating oxidoreductase complex subunit D (358 aa).

Helical transmembrane passes span Ile19–Gly39, Gly41–Ile61, Leu79–Ile99, and Ile125–Ile145. Thr186 carries the FMN phosphoryl threonine modification. 5 helical membrane passes run Phe220–Leu240, Ile248–Phe268, Leu271–Thr291, Ser297–Ile317, and Gly321–Ile341.

The protein belongs to the NqrB/RnfD family. As to quaternary structure, the complex is composed of six subunits: RnfA, RnfB, RnfC, RnfD, RnfE and RnfG. FMN is required as a cofactor.

The protein localises to the cell inner membrane. Its function is as follows. Part of a membrane-bound complex that couples electron transfer with translocation of ions across the membrane. The sequence is that of Ion-translocating oxidoreductase complex subunit D from Haemophilus influenzae (strain 86-028NP).